A 278-amino-acid chain; its full sequence is Troponin T, slow skeletal muscle (278 aa).

Over residues 1 to 37 (MSDTEEQEYEEEQPEEEAAEEEEEAPEEPEPVAEPEE) the composition is skewed to acidic residues. Disordered regions lie at residues 1–63 (MSDT…RVDF) and 105–153 (RRRS…KKKV). At Ser2 the chain carries Phosphoserine; by CK2. Over residues 43–55 (SRPVVPPLIPPKI) the composition is skewed to pro residues. Over residues 105-149 (RRRSERAEQQRFRTEKERERQAKLAEEKMRKEEEEAKKRAEDDAK) the composition is skewed to basic and acidic residues.

Belongs to the troponin T family. As to quaternary structure, interacts with TPM3.

Troponin T is the tropomyosin-binding subunit of troponin, the thin filament regulatory complex which confers calcium-sensitivity to striated muscle actomyosin ATPase activity. The sequence is that of Troponin T, slow skeletal muscle (TNNT1) from Homo sapiens (Human).